Reading from the N-terminus, the 388-residue chain is DNA ADP-ribosyl transferase-DNA ADP-ribosyl glycohydrolase fusion protein (388 aa).

The DarT domain maps to 6-197; it reads RELYYITHID…PVIPDPTFFF (192 aa). NAD(+)-binding positions include 10–12 and Arg50; that span reads YIT. The interval 34–52 is NAD(+)-binding element; that stretch reads QSINCKKVYDNSIVLKRKS. The Proton acceptor role is filled by Arg50. Residues 107 to 152 are ADP-ribosylating turn-turn loop; that stretch reads TDGNAASSETQIYRKSEIKNIKNIISVKDMEYWREEDGSKRKIMAE. Residue Glu152 is part of the active site. Residues 196–376 enclose the Macro domain; sequence FFLPNREIKL…IYLPLEKRIP (181 aa). Residues 215–216, 227–229, Thr301, 339–343, and 371–372 each bind ADP-D-ribose; these read DM, SVN, GCGLG, and LE.

This sequence in the N-terminal section; belongs to the DarT ADP-ribosyltransferase family. The protein in the C-terminal section; belongs to the DarG ADP-ribosyl glycohydrolase family.

The enzyme catalyses an N-(ADP-alpha-D-ribosyl)-thymidine in DNA + H2O = a thymidine in DNA + ADP-D-ribose. It catalyses the reaction a thymidine in DNA + NAD(+) = an N-(ADP-alpha-D-ribosyl)-thymidine in DNA + nicotinamide + H(+). Functionally, a fusion protein of the toxic and antitoxin components of a hybrid type II/IV toxin-antitoxin (TA) system. The N-terminal domain ADP-ribosylates ssDNA on a thymidine residue, while the C-terminal domain removes the modification, neutralizing the toxic effect. This is DNA ADP-ribosyl transferase-DNA ADP-ribosyl glycohydrolase fusion protein from Thermosipho africanus (strain H17ap60334).